Reading from the N-terminus, the 583-residue chain is Chloroplast sensor kinase, chloroplastic (583 aa).

The transit peptide at 1–50 (MSSIYLHGLSRRRRIGSVIVAIYMLDSCGAFLSASGSGRYPGFSYRGLSV) directs the protein to the chloroplast. The interval 97-277 (LFQELALSQL…SMDTERAALQ (181 aa)) is GAF. Cys-115 is a binding site for [3Fe-4S] cluster. At His-292 the chain carries Phosphohistidine; by autocatalysis. Residues 412–442 (AASGSNGPSNSTTSFSGNGSDVSTYTEDDGA) form a disordered region. Residues 414-431 (SGSNGPSNSTTSFSGNGS) are compositionally biased toward low complexity. The Histidine kinase domain maps to 447–583 (SSLFSEMDLE…ALDWTLRKHW (137 aa)).

The protein belongs to the chloroplast sensor kinase protein family. In terms of assembly, oligomerizes. [3Fe-4S] cluster serves as cofactor. In terms of processing, autophosphorylates, possibly on His-292.

Its subcellular location is the plastid. The protein localises to the chloroplast stroma. The enzyme catalyses ATP + protein L-histidine = ADP + protein N-phospho-L-histidine.. Its function is as follows. Sensor kinase that senses the plastoquinone (PQ) redox state involved in stoichiometry adjustment of both photosystems (e.g. long-term adaptation via transcriptional regulation of reaction center genes of photosystems I and II) and state transitions (e.g. short-term adaptation involving reversible post-translational phosphorylation of light-harvesting complex II, LHC II), thus linking photosynthesis with gene expression in chloroplasts. Reduced PQ suppresses its autophosphorylation activity. The protein is Chloroplast sensor kinase, chloroplastic of Phaeodactylum tricornutum (strain CCAP 1055/1).